The primary structure comprises 127 residues: UPF0102 protein NFA_41430 (127 aa).

It belongs to the UPF0102 family.

In Nocardia farcinica (strain IFM 10152), this protein is UPF0102 protein NFA_41430.